The primary structure comprises 390 residues: GTPase Obg (390 aa).

In terms of domain architecture, Obg spans 1–159; it reads MKFIDEALIR…RDLQLELMLL (159 aa). An OBG-type G domain is found at 160 to 333; sequence ADVGMLGLPN…LCRDIMDFIE (174 aa). GTP-binding positions include 166–173, 191–195, 213–216, 283–286, and 314–316; these read GLPNAGKS, FTTLV, DIPG, NKID, and SAV. Mg(2+)-binding residues include Ser-173 and Thr-193. The interval 363 to 390 is disordered; sequence DHQFEDEDEDWDDWSEEDEEGVETIYKP. Residues 366–384 are compositionally biased toward acidic residues; that stretch reads FEDEDEDWDDWSEEDEEGV.

This sequence belongs to the TRAFAC class OBG-HflX-like GTPase superfamily. OBG GTPase family. As to quaternary structure, monomer. The cofactor is Mg(2+).

It localises to the cytoplasm. In terms of biological role, an essential GTPase which binds GTP, GDP and possibly (p)ppGpp with moderate affinity, with high nucleotide exchange rates and a fairly low GTP hydrolysis rate. Plays a role in control of the cell cycle, stress response, ribosome biogenesis and in those bacteria that undergo differentiation, in morphogenesis control. This is GTPase Obg from Pasteurella multocida (strain Pm70).